We begin with the raw amino-acid sequence, 71 residues long: Large ribosomal subunit protein bL31 (71 aa).

4 residues coordinate Zn(2+): C16, C18, C36, and C39.

This sequence belongs to the bacterial ribosomal protein bL31 family. Type A subfamily. As to quaternary structure, part of the 50S ribosomal subunit. Requires Zn(2+) as cofactor.

Functionally, binds the 23S rRNA. The protein is Large ribosomal subunit protein bL31 of Thermotoga sp. (strain RQ2).